Here is a 1152-residue protein sequence, read N- to C-terminus: Integrin alpha-M (1152 aa).

An N-terminal signal peptide occupies residues 1–16; it reads MALRVLLLTALTLCHG. Over 17 to 1104 the chain is Extracellular; that stretch reads FNLDTENAMT…TKVEPFEVPN (1088 aa). FG-GAP repeat units lie at residues 18 to 75 and 76 to 135; these read NLDT…SCEP and IRLQ…QQPQ. Cysteine 66 and cysteine 73 are disulfide-bonded. Asparagine 86 carries an N-linked (GlcNAc...) asparagine glycan. A disulfide bond links cysteine 105 and cysteine 123. The VWFA domain occupies 150–328; sequence DIAFLIDGSG…EALKTIQNQL (179 aa). N-linked (GlcNAc...) asparagine glycosylation occurs at asparagine 240. 5 FG-GAP repeats span residues 339 to 390, 391 to 442, 443 to 503, 506 to 564, and 569 to 629; these read QTGS…STFI, NMTR…TGMW, ESNA…RARW, DAVL…SGIS, and QRIA…FNPR. Residue asparagine 391 is glycosylated (N-linked (GlcNAc...) asparagine). 11 residues coordinate Ca(2+): aspartate 465, aspartate 467, asparagine 469, aspartate 473, aspartate 529, asparagine 531, aspartate 533, aspartate 537, aspartate 592, aspartate 596, and aspartate 600. Asparagine 469 is a glycosylation site (N-linked (GlcNAc...) asparagine). Residues cysteine 654 and cysteine 711 are joined by a disulfide bond. N-linked (GlcNAc...) asparagine glycosylation is found at asparagine 692, asparagine 696, and asparagine 734. A disulfide bond links cysteine 770 and cysteine 776. Residue asparagine 801 is glycosylated (N-linked (GlcNAc...) asparagine). The cysteines at positions 847 and 864 are disulfide-linked. Residues asparagine 880, asparagine 900, asparagine 911, asparagine 940, asparagine 946, asparagine 978, asparagine 993, and asparagine 1021 are each glycosylated (N-linked (GlcNAc...) asparagine). 2 cysteine pairs are disulfide-bonded: cysteine 998-cysteine 1022 and cysteine 1027-cysteine 1032. N-linked (GlcNAc...) asparagine glycans are attached at residues asparagine 1044, asparagine 1050, and asparagine 1075. The chain crosses the membrane as a helical span at residues 1105–1128; the sequence is PLPLIVGSSVGGLLLLALITAALY. At 1129–1152 the chain is on the cytoplasmic side; it reads KLGFFKRQYKDMMSEGGPPGAEPQ. Residues 1131-1135 carry the GFFKR motif motif; the sequence is GFFKR.

The protein belongs to the integrin alpha chain family. As to quaternary structure, heterodimer of an alpha and a beta subunit. ITGAM associates with ITGB2. Found in a complex with CD177 and ITGB2/CD18. Interacts with JAM3. Interacts with THBD. Interacts with complement factor H/CFH; this interaction mediates adhesion of neutrophils to pathogens leading to pathogen clearance. Interacts with TMEM268; this interaction inhibits ITGAM degradation via the endosome-lysosome pathway. As to expression, predominantly expressed in monocytes and granulocytes. Expressed in neutrophils (at protein level).

Its subcellular location is the cell membrane. It localises to the membrane raft. In terms of biological role, integrin ITGAM/ITGB2 is implicated in various adhesive interactions of monocytes, macrophages and granulocytes as well as in mediating the uptake of complement-coated particles and pathogens. It is identical with CR-3, the receptor for the iC3b fragment of the third complement component. It probably recognizes the R-G-D peptide in C3b. Integrin ITGAM/ITGB2 is also a receptor for fibrinogen, factor X and ICAM1. It recognizes P1 and P2 peptides of fibrinogen gamma chain. Regulates neutrophil migration. In association with beta subunit ITGB2/CD18, required for CD177-PRTN3-mediated activation of TNF primed neutrophils. May regulate phagocytosis-induced apoptosis in extravasated neutrophils. May play a role in mast cell development. Required with TYROBP/DAP12 in microglia to control production of microglial superoxide ions which promote the neuronal apoptosis that occurs during brain development. This chain is Integrin alpha-M (ITGAM), found in Homo sapiens (Human).